Consider the following 1330-residue polypeptide: Pre-mRNA-splicing factor CWC22 homolog (1330 aa).

The disordered stretch occupies residues 1–377 (MGESDAESDS…AAKITERQRK (377 aa)). Over residues 9–36 (DSSSNSSSSDTSSGSDSDARSESSSSES) the composition is skewed to low complexity. Residues 46–94 (QEESAKDAKKTDDTDRGEKRAKERDAGQDEQPTEQKKTPAAEPRSERQH) are compositionally biased toward basic and acidic residues. Residues 99-113 (AGVEKQQEEAVAAAE) are compositionally biased toward low complexity. The segment covering 115–135 (ESEKLNEAKKVETPVQRKEEA) has biased composition (basic and acidic residues). The segment covering 138–148 (SSVTKELNSPK) has biased composition (polar residues). A compositionally biased stretch (basic and acidic residues) spans 149-166 (AQEENAARELEERRKDEE). Positions 168–177 (PVTTNGSSKE) are enriched in polar residues. Thr191 and Thr201 each carry phosphothreonine. Composition is skewed to basic and acidic residues over residues 191–201 (TADHIEEGEIT) and 208–236 (LPTK…SPDG). Phosphoserine occurs at positions 219 and 221. Residues 252–277 (SRRRRRSRSKGSRTRSRSKSPIRRRS) are compositionally biased toward basic residues. Composition is skewed to basic and acidic residues over residues 278 to 307 (NSLE…EREK) and 316 to 325 (SSRRRDDSRE). Residues 355-366 (TETNADNETVTE) are compositionally biased toward low complexity. One can recognise an MIF4G domain in the interval 420–603 (KKSIHGYINK…EVLFQIRKDG (184 aa)). Residues 660 to 697 (REILGSDDGSSSGSGSGSDSDSDSDGESGSDAEKKAEA) are disordered. Residues 665–678 (SDDGSSSGSGSGSD) show a composition bias toward low complexity. Positions 679–689 (SDSDSDGESGS) are enriched in acidic residues. Positions 710 to 826 (ALRRTIYLTI…SWDVLECIQL (117 aa)) constitute an MI domain. The segment at 926–1330 (FRDGSAPAGN…RSSRRSKGRS (405 aa)) is disordered. The span at 941–951 (SSSSSSSSSSD) shows a compositional bias: low complexity. Over residues 952–963 (TDSEDSSEEDSS) the composition is skewed to acidic residues. Low complexity predominate over residues 964 to 976 (SDSSSESSSSDSS). A compositionally biased stretch (basic residues) spans 980–1012 (KKKRKRKDKDKKKSKKATKEKSKKTKNKKKKKK). Positions 1013–1033 (AEKEQEKEKEKQRKSKKEKEK) are enriched in basic and acidic residues. Positions 1034–1054 (DKKRKKEEKKAAKKKSKHRRK) are enriched in basic residues. Over residues 1072 to 1082 (SESSDSSNSSS) the composition is skewed to low complexity. Residues 1089–1110 (PQAKIKRQEHVEKNKFRGRTQD) show a composition bias toward basic and acidic residues. Position 1108 is a phosphothreonine (Thr1108). 4 positions are modified to phosphoserine: Ser1111, Ser1121, Ser1180, and Ser1181. Composition is skewed to basic and acidic residues over residues 1133 to 1195 (RRRD…VAHD) and 1203 to 1320 (SRSY…SRRE). A Phosphotyrosine modification is found at Tyr1182. Positions 1321-1330 (RSSRRSKGRS) are enriched in basic residues.

The protein belongs to the CWC22 family. Component of the spliceosome C complex. Interacts with eIF4AIII.

It is found in the nucleus speckle. Functionally, required for pre-mRNA splicing and for exon-junction complex (EJC) assembly. Hinders eIF4AIII from non-specifically binding RNA and escorts it to the splicing machinery to promote EJC assembly on mature mRNAs. This is Pre-mRNA-splicing factor CWC22 homolog (ncm) from Drosophila melanogaster (Fruit fly).